The following is a 445-amino-acid chain: Elongation factor 1-alpha (445 aa).

The 226-residue stretch at 5 to 230 (KVHISLVVIG…DNLEPPKRPS (226 aa)) folds into the tr-type G domain. Residues 14–21 (GHVDSGKS) are G1. 14 to 21 (GHVDSGKS) serves as a coordination point for GTP. Residue K55 is modified to N6,N6-dimethyllysine. The interval 70–74 (CITID) is G2. N6,N6,N6-trimethyllysine is present on K79. Positions 91-94 (DAPG) are G3. GTP is bound by residues 91–95 (DAPGH) and 153–156 (NKFD). The segment at 153 to 156 (NKFD) is G4. Position 187 is an N6,N6,N6-trimethyllysine (K187). The segment at 194-196 (SGW) is G5. The residue at position 261 (K261) is an N6-methyllysine. 2 positions are modified to N6,N6,N6-trimethyllysine: K306 and K396.

The protein belongs to the TRAFAC class translation factor GTPase superfamily. Classic translation factor GTPase family. EF-Tu/EF-1A subfamily.

It is found in the cytoplasm. Functionally, this protein promotes the GTP-dependent binding of aminoacyl-tRNA to the A-site of ribosomes during protein biosynthesis. The sequence is that of Elongation factor 1-alpha (TEF) from Euglena gracilis.